Here is a 193-residue protein sequence, read N- to C-terminus: Ion-translocating oxidoreductase complex subunit B (193 aa).

The interval 1–26 is hydrophobic; the sequence is MSTMLIAVILLTLLALFFGVLLGFAA. Residues 32 to 90 enclose the 4Fe-4S domain; that stretch reads EGNPIVDELEAILPQTQCGQCGYPGCRPYAEAIANGDKVNKCPPGGTATMEKLASLMGV. Residues C49, C52, C57, C73, C114, C117, C120, C124, C144, C147, C150, and C154 each contribute to the [4Fe-4S] cluster site. 4Fe-4S ferredoxin-type domains are found at residues 105 to 134 and 136 to 164; these read KVAY…GAGK and MHTV…MIPV.

It belongs to the 4Fe4S bacterial-type ferredoxin family. RnfB subfamily. The complex is composed of six subunits: RnfA, RnfB, RnfC, RnfD, RnfE and RnfG. [4Fe-4S] cluster is required as a cofactor.

It localises to the cell inner membrane. In terms of biological role, part of a membrane-bound complex that couples electron transfer with translocation of ions across the membrane. The sequence is that of Ion-translocating oxidoreductase complex subunit B from Shewanella sp. (strain MR-7).